We begin with the raw amino-acid sequence, 307 residues long: Methionyl-tRNA formyltransferase (307 aa).

109 to 112 lines the (6S)-5,6,7,8-tetrahydrofolate pocket; sequence SLLP.

It belongs to the Fmt family.

It catalyses the reaction L-methionyl-tRNA(fMet) + (6R)-10-formyltetrahydrofolate = N-formyl-L-methionyl-tRNA(fMet) + (6S)-5,6,7,8-tetrahydrofolate + H(+). Its function is as follows. Attaches a formyl group to the free amino group of methionyl-tRNA(fMet). The formyl group appears to play a dual role in the initiator identity of N-formylmethionyl-tRNA by promoting its recognition by IF2 and preventing the misappropriation of this tRNA by the elongation apparatus. This Mycobacteroides abscessus (strain ATCC 19977 / DSM 44196 / CCUG 20993 / CIP 104536 / JCM 13569 / NCTC 13031 / TMC 1543 / L948) (Mycobacterium abscessus) protein is Methionyl-tRNA formyltransferase.